Consider the following 334-residue polypeptide: Fructose-1,6-bisphosphatase class 1 (334 aa).

Mg(2+)-binding residues include Glu90, Asp113, Leu115, and Asp116. Residues 116 to 119 (DGSS), Asn209, Tyr242, and Lys272 contribute to the substrate site. A Mg(2+)-binding site is contributed by Glu278.

This sequence belongs to the FBPase class 1 family. As to quaternary structure, homotetramer. Requires Mg(2+) as cofactor.

It is found in the cytoplasm. The enzyme catalyses beta-D-fructose 1,6-bisphosphate + H2O = beta-D-fructose 6-phosphate + phosphate. It participates in carbohydrate biosynthesis; gluconeogenesis. The sequence is that of Fructose-1,6-bisphosphatase class 1 from Actinobacillus pleuropneumoniae serotype 5b (strain L20).